Here is a 193-residue protein sequence, read N- to C-terminus: NADH-quinone oxidoreductase subunit B (193 aa).

Residues Cys72, Cys73, Cys137, and Cys167 each coordinate [4Fe-4S] cluster.

This sequence belongs to the complex I 20 kDa subunit family. As to quaternary structure, NDH-1 is composed of 14 different subunits. Subunits NuoB, C, D, E, F, and G constitute the peripheral sector of the complex. Requires [4Fe-4S] cluster as cofactor.

It is found in the cell inner membrane. It catalyses the reaction a quinone + NADH + 5 H(+)(in) = a quinol + NAD(+) + 4 H(+)(out). In terms of biological role, NDH-1 shuttles electrons from NADH, via FMN and iron-sulfur (Fe-S) centers, to quinones in the respiratory chain. The immediate electron acceptor for the enzyme in this species is believed to be ubiquinone. Couples the redox reaction to proton translocation (for every two electrons transferred, four hydrogen ions are translocated across the cytoplasmic membrane), and thus conserves the redox energy in a proton gradient. The polypeptide is NADH-quinone oxidoreductase subunit B (Caulobacter vibrioides (strain ATCC 19089 / CIP 103742 / CB 15) (Caulobacter crescentus)).